We begin with the raw amino-acid sequence, 383 residues long: Na(+)/H(+) antiporter NhaA (383 aa).

11 helical membrane passes run 19 to 39 (AGGVILMVTAALALVIANSPL), 56 to 76 (VLHGINDGLMAVFFLLVGLEI), 92 to 112 (ILPGLAALGGMVVPALVFLAL), 122 to 142 (GWAVPTATDIAFALGVLALLG), 151 to 171 (IFLTALAIIDDLGAVLVIALF), 174 to 194 (AKLSWPALVAVAAILALLAAL), 212 to 232 (LWGAMLQSGVHATVAGIALAL), 255 to 275 (VGYGIVPIFGFANAGVSFAGL), 292 to 312 (LLFGKQIGVFGTAWMAIWLGF), 326 to 346 (GVAVLCGIGFTMSLFIGALAF), and 356 to 376 (VKVGVLAGSALSAILGSLVLL).

Belongs to the NhaA Na(+)/H(+) (TC 2.A.33) antiporter family.

It is found in the cell inner membrane. It carries out the reaction Na(+)(in) + 2 H(+)(out) = Na(+)(out) + 2 H(+)(in). In terms of biological role, na(+)/H(+) antiporter that extrudes sodium in exchange for external protons. This chain is Na(+)/H(+) antiporter NhaA, found in Paramagnetospirillum magneticum (strain ATCC 700264 / AMB-1) (Magnetospirillum magneticum).